The sequence spans 664 residues: Sulfoquinovosidase (664 aa).

Positions 135, 270, 283, 284, and 286 each coordinate 3-(6-sulfo-alpha-D-quinovosyl)glycerol. Asp388 (nucleophile) is an active-site residue. The active site involves Glu391. Arg438 lines the 3-(6-sulfo-alpha-D-quinovosyl)glycerol pocket. Asp455 (proton donor) is an active-site residue. His520 provides a ligand contact to 3-(6-sulfo-alpha-D-quinovosyl)glycerol.

The protein belongs to the glycosyl hydrolase 31 family.

The enzyme catalyses 3-(6-sulfo-alpha-D-quinovosyl)glycerol + H2O = 6-sulfo-alpha-D-quinovose + glycerol. Its function is as follows. Part of the sulfoquinovose monooxygenase (sulfo-SMO) pathway, a D-sulfoquinovose degradation pathway that enables the complete utilization of all carbons within sulfoquinovose (SQ) with concomitant production of inorganic sulfite. Catalyzes the first step of the pathway, the hydrolysis of sulfoquinovosyl glycerol (SQGro) to release sulfoquinovose (SQ). Hydrolyzes both epimers of SQGro, with a preference for the natural 2'R isomer. In vitro, can use the substrate analog para-nitrophenyl alpha-sulfoquinovoside (PNPSQ), but shows no detectable activity toward 4-nitrophenyl alpha-D-glucopyranoside (PNPGlc). The sequence is that of Sulfoquinovosidase from Agrobacterium fabrum (strain C58 / ATCC 33970) (Agrobacterium tumefaciens (strain C58)).